A 91-amino-acid polypeptide reads, in one-letter code: Small ribosomal subunit protein bS20 (91 aa).

It belongs to the bacterial ribosomal protein bS20 family.

Its function is as follows. Binds directly to 16S ribosomal RNA. This is Small ribosomal subunit protein bS20 from Wolinella succinogenes (strain ATCC 29543 / DSM 1740 / CCUG 13145 / JCM 31913 / LMG 7466 / NCTC 11488 / FDC 602W) (Vibrio succinogenes).